Here is a 157-residue protein sequence, read N- to C-terminus: Protein Smg (157 aa).

Belongs to the Smg family.

In Shigella boydii serotype 4 (strain Sb227), this protein is Protein Smg.